The primary structure comprises 210 residues: MATRIENKKLSKSSSAWMKEHIDDHYVQKAQKDGYRARAAYKLLEINEKTNLIKKGMTVVDLGSAPGSWSQVAGQLVGEKGILIASDILPMDTLPDVTFIQGDFREPEVFDHIMAEVGDRQVDVVLSDMAPNTAGNSAIDQPRMMYLCELAVDFALATLPEGGALIMKVFQGEGTQELRKQMQADFSKIRSIKPGASRPRSKEMFWIAIK.

S-adenosyl-L-methionine is bound by residues Gly67, Trp69, Asp87, Asp103, and Asp128. Lys168 acts as the Proton acceptor in catalysis.

It belongs to the class I-like SAM-binding methyltransferase superfamily. RNA methyltransferase RlmE family.

It localises to the cytoplasm. It catalyses the reaction uridine(2552) in 23S rRNA + S-adenosyl-L-methionine = 2'-O-methyluridine(2552) in 23S rRNA + S-adenosyl-L-homocysteine + H(+). In terms of biological role, specifically methylates the uridine in position 2552 of 23S rRNA at the 2'-O position of the ribose in the fully assembled 50S ribosomal subunit. The chain is Ribosomal RNA large subunit methyltransferase E from Psychrobacter arcticus (strain DSM 17307 / VKM B-2377 / 273-4).